The chain runs to 490 residues: Betaine aldehyde dehydrogenase (490 aa).

Threonine 26 and aspartate 93 together coordinate K(+). Residue 150 to 152 (GAW) coordinates NAD(+). Lysine 162 serves as the catalytic Charge relay system. An NAD(+)-binding site is contributed by 176–179 (KPSE). Valine 180 is a binding site for K(+). Residue 230 to 233 (GVAT) coordinates NAD(+). Leucine 246 contributes to the K(+) binding site. Catalysis depends on glutamate 252, which acts as the Proton acceptor. Residues glycine 254, cysteine 286, and glutamate 387 each contribute to the NAD(+) site. The active-site Nucleophile is cysteine 286. The residue at position 286 (cysteine 286) is a Cysteine sulfenic acid (-SOH). K(+) contacts are provided by lysine 457 and glycine 460. Residue glutamate 464 is the Charge relay system of the active site.

This sequence belongs to the aldehyde dehydrogenase family. As to quaternary structure, dimer of dimers. Requires K(+) as cofactor.

It catalyses the reaction betaine aldehyde + NAD(+) + H2O = glycine betaine + NADH + 2 H(+). It functions in the pathway amine and polyamine biosynthesis; betaine biosynthesis via choline pathway; betaine from betaine aldehyde: step 1/1. Its function is as follows. Involved in the biosynthesis of the osmoprotectant glycine betaine. Catalyzes the irreversible oxidation of betaine aldehyde to the corresponding acid. This Stenotrophomonas maltophilia (strain R551-3) protein is Betaine aldehyde dehydrogenase.